Reading from the N-terminus, the 416-residue chain is MNEPEGLRFRRLNRPQIITDELQEPQYKGTSTYSGKVFRVILVTLGGCLILPLLVVFFLLESPIHPELLSLSEPPLMSGCYEPNFKLREAQRLFEDQLVGPESIANFGDLIYTGTADGKIVKIEGKSITVIARLGKPPCDGSREQEPSCGRPLGIRVGPNGTLFVADAYLGLFKVNPVTGEVTNLVSAGQMVGGRRLSFVNDLDVTQDGRKVYFTDSSSRWQRRDYLHLIMEATADGRVLEYDTETKEVTVLMENLRFANGIQLFPDEESVLVAETTMARIRRVHVSGLNKGGMDTFVDNLPGFPDNIRRSSSGGYWVAMSAVRPNPGFSMLDFLSQKPWIKKLIFKLFSQDVLMKFVPRYSLVIELQESGACMRSFHDPHGMVAAYVSEAHEHDGHLYLGSFRSPYLCKLDLSKV.

At 1-39 (MNEPEGLRFRRLNRPQIITDELQEPQYKGTSTYSGKVFR) the chain is on the cytoplasmic side. Residues 40–60 (VILVTLGGCLILPLLVVFFLL) traverse the membrane as a helical segment. Residues 61–412 (ESPIHPELLS…FRSPYLCKLD (352 aa)) lie on the Extracellular side of the membrane. Asn-160 carries an N-linked (GlcNAc...) asparagine glycan.

Belongs to the strictosidine synthase family.

Its subcellular location is the membrane. The protein is Adipocyte plasma membrane-associated protein (apmap) of Salmo salar (Atlantic salmon).